We begin with the raw amino-acid sequence, 376 residues long: Chaperone protein DnaJ (376 aa).

Positions 5-70 constitute a J domain; it reads DYYEILGVER…QKRAAYDKFG (66 aa). The segment at 131–209 adopts a CR-type zinc-finger fold; it reads GVSKEIKVPT…CHGDGRVQKT (79 aa). Positions 144, 147, 161, 164, 183, 186, 197, and 200 each coordinate Zn(2+). CXXCXGXG motif repeat units lie at residues 144 to 151, 161 to 168, 183 to 190, and 197 to 204; these read CDECHGSG, CPTCHGSG, CPHCHGKG, and CRKCHGDG.

It belongs to the DnaJ family. As to quaternary structure, homodimer. Zn(2+) is required as a cofactor.

It is found in the cytoplasm. Functionally, participates actively in the response to hyperosmotic and heat shock by preventing the aggregation of stress-denatured proteins and by disaggregating proteins, also in an autonomous, DnaK-independent fashion. Unfolded proteins bind initially to DnaJ; upon interaction with the DnaJ-bound protein, DnaK hydrolyzes its bound ATP, resulting in the formation of a stable complex. GrpE releases ADP from DnaK; ATP binding to DnaK triggers the release of the substrate protein, thus completing the reaction cycle. Several rounds of ATP-dependent interactions between DnaJ, DnaK and GrpE are required for fully efficient folding. Also involved, together with DnaK and GrpE, in the DNA replication of plasmids through activation of initiation proteins. This chain is Chaperone protein DnaJ, found in Tolumonas auensis (strain DSM 9187 / NBRC 110442 / TA 4).